We begin with the raw amino-acid sequence, 117 residues long: Large ribosomal subunit protein bL19 (117 aa).

The protein belongs to the bacterial ribosomal protein bL19 family.

Its function is as follows. This protein is located at the 30S-50S ribosomal subunit interface and may play a role in the structure and function of the aminoacyl-tRNA binding site. In Vibrio cholerae serotype O1 (strain ATCC 39541 / Classical Ogawa 395 / O395), this protein is Large ribosomal subunit protein bL19.